The primary structure comprises 303 residues: Acetaldehyde dehydrogenase 1 (303 aa).

Cys130 (acyl-thioester intermediate) is an active-site residue. NAD(+) contacts are provided by residues Ser161–Asn169 and Asn272.

It belongs to the acetaldehyde dehydrogenase family.

It catalyses the reaction acetaldehyde + NAD(+) + CoA = acetyl-CoA + NADH + H(+). In Cupriavidus metallidurans (strain ATCC 43123 / DSM 2839 / NBRC 102507 / CH34) (Ralstonia metallidurans), this protein is Acetaldehyde dehydrogenase 1.